The sequence spans 298 residues: MTEQAISFAKDFLAGGIAAAISKTAVAPIERVKLLLQVQHASKQIAADKQYKGIVDCIVRIPKEQGVLSFWRGNLANVIRYFPTQALNFAFKDKYKQIFLGGVDKHTQFWRYFAGNLASGGAAGATSLCFVYPLDFARTRLAADVGKSGTEREFRGLGDCLVKITKSDGIRGLYQGFSVSVQGIIIYRAAYFGVYDTAKGMLPDPKNTHIVVSWMIAQTVTAVAGVVSYPFDTVRRRMMMQSGRKGADIMYTGTVDCWRKIFRDEGGKAFFKGAWSNVLRGMGGAFVLVLYDELKKVI.

Met1 carries the N-acetylmethionine modification. Residues 1–7 (MTEQAIS) are Mitochondrial intermembrane-facing. Thr2 is modified (N-acetylthreonine; in ADP/ATP translocase 3, N-terminally processed). The stretch at 6–98 (ISFAKDFLAG…FAFKDKYKQI (93 aa)) is one Solcar 1 repeat. Residues 8–37 (FAKDFLAGGIAAAISKTAVAPIERVKLLLQ) traverse the membrane as a helical segment. At 38-74 (VQHASKQIAADKQYKGIVDCIVRIPKEQGVLSFWRGN) the chain is on the mitochondrial matrix side. An N6,N6,N6-trimethyllysine modification is found at Lys52. Residues 75–99 (LANVIRYFPTQALNFAFKDKYKQIF) traverse the membrane as a helical segment. ADP-binding residues include Arg80 and Lys92. The Mitochondrial intermembrane segment spans residues 100–109 (LGGVDKHTQF). At Lys105 the chain carries N6-acetyllysine. A helical membrane pass occupies residues 110-130 (WRYFAGNLASGGAAGATSLCF). Solcar repeat units lie at residues 111–201 (RYFA…AKGM) and 212–297 (VSWM…LKKV). The Mitochondrial matrix segment spans residues 131-178 (VYPLDFARTRLAADVGKSGTEREFRGLGDCLVKITKSDGIRGLYQGFS). Residues 179–199 (VSVQGIIIYRAAYFGVYDTAK) traverse the membrane as a helical segment. Topologically, residues 200-210 (GMLPDPKNTHI) are mitochondrial intermembrane. The chain crosses the membrane as a helical span at residues 211–231 (VVSWMIAQTVTAVAGVVSYPF). The Mitochondrial matrix portion of the chain corresponds to 232-273 (DTVRRRMMMQSGRKGADIMYTGTVDCWRKIFRDEGGKAFFKG). Arg235 is a binding site for ADP. An important for transport activity region spans residues 235 to 240 (RRRMMM). Positions 235-240 (RRRMMM) match the Nucleotide carrier signature motif motif. Lys268 carries the post-translational modification N6-acetyllysine. A helical membrane pass occupies residues 274 to 291 (AWSNVLRGMGGAFVLVLY). Over 292-298 (DELKKVI) the chain is Mitochondrial intermembrane.

It belongs to the mitochondrial carrier (TC 2.A.29) family. Monomer. Found in a complex with ARL2, ARL2BP and SLC25A6/ANT3. As to quaternary structure, (Microbial infection) Interacts with influenza A virus PB1-F2 protein. In terms of assembly, (Microbial infection) Interacts with HIV-1 Vpr. Post-translationally, trimethylated by ANTKMT at Lys-52. As to expression, expressed in erythrocytes (at protein level).

Its subcellular location is the mitochondrion inner membrane. It localises to the membrane. It catalyses the reaction ADP(in) + ATP(out) = ADP(out) + ATP(in). It carries out the reaction H(+)(in) = H(+)(out). The matrix-open state (m-state) is inhibited by the membrane-permeable bongkrekic acid (BKA). The cytoplasmic-open state (c-state) is inhibited by the membrane-impermeable toxic inhibitor carboxyatractyloside (CATR). Proton transporter activity is inhibited by ADP:ATP antiporter activity. In terms of biological role, ADP:ATP antiporter that mediates import of ADP into the mitochondrial matrix for ATP synthesis, and export of ATP out to fuel the cell. Cycles between the cytoplasmic-open state (c-state) and the matrix-open state (m-state): operates by the alternating access mechanism with a single substrate-binding site intermittently exposed to either the cytosolic (c-state) or matrix (m-state) side of the inner mitochondrial membrane. In addition to its ADP:ATP antiporter activity, also involved in mitochondrial uncoupling and mitochondrial permeability transition pore (mPTP) activity. Plays a role in mitochondrial uncoupling by acting as a proton transporter: proton transport uncouples the proton flows via the electron transport chain and ATP synthase to reduce the efficiency of ATP production and cause mitochondrial thermogenesis. Proton transporter activity is inhibited by ADP:ATP antiporter activity, suggesting that SLC25A6/ANT3 acts as a master regulator of mitochondrial energy output by maintaining a delicate balance between ATP production (ADP:ATP antiporter activity) and thermogenesis (proton transporter activity). Proton transporter activity requires free fatty acids as cofactor, but does not transport it. Also plays a key role in mPTP opening, a non-specific pore that enables free passage of the mitochondrial membranes to solutes of up to 1.5 kDa, and which contributes to cell death. It is however unclear if SLC25A6/ANT3 constitutes a pore-forming component of mPTP or regulates it. The chain is ADP/ATP translocase 3 from Homo sapiens (Human).